The sequence spans 912 residues: DNA ligase 4 (912 aa).

Positions 276, 277, 278, 279, 283, 336, 350, 372, 432, 437, 454, and 456 each coordinate ATP. The active-site N6-AMP-lysine intermediate is the Lys278. Glu336 contributes to the Mg(2+) binding site. Glu432 provides a ligand contact to Mg(2+). The segment at Leu615 to Tyr625 is required for catalytic activity. BRCT domains are found at residues Lys659 to Met748 and Cys809 to Ile912.

This sequence belongs to the ATP-dependent DNA ligase family. In terms of assembly, interacts with XRCC4; the LIG4-XRCC4 subcomplex has a 1:2 stoichiometry. Component of the core long-range non-homologous end joining (NHEJ) complex (also named DNA-PK complex) composed of PRKDC, LIG4, XRCC4, XRCC6/Ku70, XRCC5/Ku86 and NHEJ1/XLF. Additional component of the NHEJ complex includes PAXX. Following autophosphorylation, PRKDC dissociates from DNA, leading to formation of the short-range NHEJ complex, composed of LIG4, XRCC4, XRCC6/Ku70, XRCC5/Ku86 and NHEJ1/XLF. It depends on Mg(2+) as a cofactor.

The protein resides in the nucleus. It carries out the reaction ATP + (deoxyribonucleotide)n-3'-hydroxyl + 5'-phospho-(deoxyribonucleotide)m = (deoxyribonucleotide)n+m + AMP + diphosphate.. In terms of biological role, DNA ligase involved in DNA non-homologous end joining (NHEJ); required for double-strand break (DSB) repair and V(D)J recombination. Catalyzes the NHEJ ligation step of the broken DNA during DSB repair by resealing the DNA breaks after the gap filling is completed. Joins single-strand breaks in a double-stranded polydeoxynucleotide in an ATP-dependent reaction. LIG4 is mechanistically flexible: it can ligate nicks as well as compatible DNA overhangs alone, while in the presence of XRCC4, it can ligate ends with 2-nucleotides (nt) microhomology and 1-nt gaps. Forms a subcomplex with XRCC4; the LIG4-XRCC4 subcomplex is responsible for the NHEJ ligation step and XRCC4 enhances the joining activity of LIG4. The protein is DNA ligase 4 of Gallus gallus (Chicken).